The sequence spans 644 residues: Exoribonuclease 2 (644 aa).

In terms of domain architecture, RNB spans 189–516; the sequence is RQDLTALNFV…NHRLLKAVIK (328 aa). Positions 561 to 643 constitute an S1 motif domain; it reads NTRFAAEIID…ETRSIIARPA (83 aa).

It belongs to the RNR ribonuclease family. RNase II subfamily.

The protein resides in the cytoplasm. It carries out the reaction Exonucleolytic cleavage in the 3'- to 5'-direction to yield nucleoside 5'-phosphates.. Involved in mRNA degradation. Hydrolyzes single-stranded polyribonucleotides processively in the 3' to 5' direction. This is Exoribonuclease 2 from Salmonella newport (strain SL254).